The following is a 347-amino-acid chain: Metacaspase-2 (347 aa).

A propeptide spanning residues 1 to 55 (MCSLITQLCDAGQLADYVGLGWLNAVSSQPYLVQALGLQPPPRRVDVDAAFRDAK) is cleaved from the precursor. The tract at residues 1-70 (MCSLITQLCD…QPWVATPLPG (70 aa)) is regulates substrate access to the active site. H158 is an active-site residue. The Ca(2+) site is built by D173, D189, and D190. Residue C213 is part of the active site. Residue D220 coordinates Ca(2+).

It belongs to the peptidase C14B family. In terms of assembly, monomer. Auto-proteolytic cleavage of the propeptide after Lys-55 and between the large and small subunits after Lys-268 is required for catalytic activity towards large protein substrates but is dispensable towards small oligopeptide substrates. After processing, the propeptide and the large and small subunits remain associated by non-covalent bonds. In vivo, the unprocessed enzyme appears to be the predominant form.

The protein localises to the recycling endosome. With respect to regulation, activated by Ca(2+). In response to calcium binding, the 280-loop, a disordered loop consisting of residues 269-275, undergoes a conformational change which stabilizes substrates in the active site. The binding to the substrate triggers the release of the N-terminal region resulting in the activation of the enzyme. Proteolytic cleavage is required for catalytic activity towards large protein substrates. In terms of biological role, cysteine protease that cleaves specifically after arginine or lysine residues. In Trypanosoma brucei brucei (strain 927/4 GUTat10.1), this protein is Metacaspase-2.